A 151-amino-acid polypeptide reads, in one-letter code: RNA polymerase-binding transcription factor DksA (151 aa).

Zn(2+) is bound by residues Cys114, Cys117, Cys135, and Cys138. A dksA C4-type zinc finger spans residues 114-138; it reads CNSCSVEIGIRRLEARPTADLCIDC.

The protein belongs to the DksA family. As to quaternary structure, interacts directly with the RNA polymerase.

The protein localises to the cytoplasm. Transcription factor that acts by binding directly to the RNA polymerase (RNAP). Required for negative regulation of rRNA expression and positive regulation of several amino acid biosynthesis promoters. Also required for regulation of fis expression. This Buchnera aphidicola subsp. Acyrthosiphon pisum (strain APS) (Acyrthosiphon pisum symbiotic bacterium) protein is RNA polymerase-binding transcription factor DksA.